The following is a 180-amino-acid chain: GTP cyclohydrolase 1 (180 aa).

Cysteine 71, histidine 74, and cysteine 142 together coordinate Zn(2+).

The protein belongs to the GTP cyclohydrolase I family. In terms of assembly, homomer.

It catalyses the reaction GTP + H2O = 7,8-dihydroneopterin 3'-triphosphate + formate + H(+). It functions in the pathway cofactor biosynthesis; 7,8-dihydroneopterin triphosphate biosynthesis; 7,8-dihydroneopterin triphosphate from GTP: step 1/1. The protein is GTP cyclohydrolase 1 of Helicobacter pylori (strain G27).